The chain runs to 488 residues: Cytochrome P450 71A24 (488 aa).

A helical membrane pass occupies residues 3–23; it reads MMMMIILLLCSIILITILFFK. Residue Cys-433 coordinates heme.

It belongs to the cytochrome P450 family. Requires heme as cofactor.

Its subcellular location is the membrane. The sequence is that of Cytochrome P450 71A24 (CYP71A24) from Arabidopsis thaliana (Mouse-ear cress).